The sequence spans 306 residues: GTPase Era (306 aa).

Residues 13 to 181 form the Era-type G domain; the sequence is YCGFIAIVGR…EKIVRESLHE (169 aa). The interval 21–28 is G1; the sequence is GRPNVGKS. Residue 21–28 participates in GTP binding; it reads GRPNVGKS. The tract at residues 47–51 is G2; that stretch reads QTTRH. The tract at residues 68 to 71 is G3; that stretch reads DTPG. GTP is bound by residues 68–72 and 130–133; these read DTPGL and NKID. The G4 stretch occupies residues 130–133; it reads NKID. The interval 160-162 is G5; that stretch reads ISA. In terms of domain architecture, KH type-2 spans 212-289; the sequence is TGDELPYSVT…HLELWVKVKS (78 aa).

The protein belongs to the TRAFAC class TrmE-Era-EngA-EngB-Septin-like GTPase superfamily. Era GTPase family. In terms of assembly, monomer.

It localises to the cytoplasm. The protein resides in the cell inner membrane. Functionally, an essential GTPase that binds both GDP and GTP, with rapid nucleotide exchange. Plays a role in 16S rRNA processing and 30S ribosomal subunit biogenesis and possibly also in cell cycle regulation and energy metabolism. This chain is GTPase Era, found in Pasteurella multocida (strain Pm70).